The chain runs to 444 residues: Tubulin beta-8 chain (444 aa).

The MREI motif motif lies at 1–4 (MREI). GTP contacts are provided by Gln-11, Glu-69, Ser-138, Gly-142, Thr-143, and Gly-144. Glu-69 serves as a coordination point for Mg(2+). The residue at position 172 (Ser-172) is a Phosphoserine; by CDK1. GTP is bound by residues Asn-204 and Asn-226. A disordered region spans residues 423-444 (QQYQDATAEEEEDEEYAEEEVA). The segment covering 429–444 (TAEEEEDEEYAEEEVA) has biased composition (acidic residues). A 5-glutamyl polyglutamate modification is found at Glu-436.

It belongs to the tubulin family. In terms of assembly, dimer of alpha and beta chains. A typical microtubule is a hollow water-filled tube with an outer diameter of 25 nm and an inner diameter of 15 nM. Alpha-beta heterodimers associate head-to-tail to form protofilaments running lengthwise along the microtubule wall with the beta-tubulin subunit facing the microtubule plus end conferring a structural polarity. Microtubules usually have 13 protofilaments but different protofilament numbers can be found in some organisms and specialized cells. The cofactor is Mg(2+). Some glutamate residues at the C-terminus are polyglycylated, resulting in polyglycine chains on the gamma-carboxyl group. Glycylation is mainly limited to tubulin incorporated into axonemes (cilia and flagella) whereas glutamylation is prevalent in neuronal cells, centrioles, axonemes, and the mitotic spindle. Both modifications can coexist on the same protein on adjacent residues, and lowering polyglycylation levels increases polyglutamylation, and reciprocally. Cilia and flagella glycylation is required for their stability and maintenance. Flagella glycylation controls sperm motility. In terms of processing, some glutamate residues at the C-terminus are polyglutamylated, resulting in polyglutamate chains on the gamma-carboxyl group. Polyglutamylation plays a key role in microtubule severing by spastin (SPAST). SPAST preferentially recognizes and acts on microtubules decorated with short polyglutamate tails: severing activity by SPAST increases as the number of glutamates per tubulin rises from one to eight, but decreases beyond this glutamylation threshold. Glutamylation is also involved in cilia motility. Post-translationally, phosphorylated on Ser-172 by CDK1 during the cell cycle, from metaphase to telophase, but not in interphase. This phosphorylation inhibits tubulin incorporation into microtubules.

The protein resides in the cytoplasm. It localises to the cytoskeleton. Its subcellular location is the spindle. Its function is as follows. Tubulin is the major constituent of microtubules, a cylinder consisting of laterally associated linear protofilaments composed of alpha- and beta-tubulin heterodimers. Microtubules grow by the addition of GTP-tubulin dimers to the microtubule end, where a stabilizing cap forms. Below the cap, tubulin dimers are in GDP-bound state, owing to GTPase activity of alpha-tubulin. Has a key role in meiotic spindle assembly and oocyte maturation. In Pan troglodytes (Chimpanzee), this protein is Tubulin beta-8 chain (TUBB8).